Consider the following 404-residue polypeptide: Multidrug resistance protein MdtG (404 aa).

11 helical membrane-spanning segments follow: residues 19–39 (LGCF…PLYV), 56–76 (LVFS…GGLA), 90–110 (LGMA…QFLI), 113–133 (ALLG…ATQV), 149–169 (GVSG…HYGL), 171–191 (PVFF…FFFI), 222–242 (LFVT…ILTL), 254–274 (IAFI…LSAP), 288–308 (ILIV…FVQT), 317–337 (FLLG…LVYN), and 376–396 (AVFC…WNSL).

Belongs to the major facilitator superfamily. DHA1 family. MdtG (TC 2.A.1.2.20) subfamily.

The protein localises to the cell inner membrane. The protein is Multidrug resistance protein MdtG of Salmonella paratyphi C (strain RKS4594).